The primary structure comprises 30 residues: Non-toxic phospholipase A2 (30 aa).

Residues Y26, G28, and G30 each contribute to the Ca(2+) site.

The protein belongs to the phospholipase A2 family. Group I subfamily. Homodimer. Ca(2+) is required as a cofactor. Post-translationally, glycosylated. As to expression, expressed by the venom gland.

It localises to the secreted. It catalyses the reaction a 1,2-diacyl-sn-glycero-3-phosphocholine + H2O = a 1-acyl-sn-glycero-3-phosphocholine + a fatty acid + H(+). Its activity is regulated as follows. Enzymatic activity is diminished by Cd(2+) and Hg(2+). Its function is as follows. Relatively highly potent phospholipase A2 that displays potent antimicrobial and hemolytic activities. It does not show cytotoxic effects on the three human cell lines tested. PLA2 catalyzes the calcium-dependent hydrolysis of the 2-acyl groups in 3-sn-phosphoglycerides. It shows similar potencies on both Gram-negative and Gram-positive bacteria: B.cereus (MIC&gt;9 ug/ml), B.subtilis (MIC&gt;12 ug/ml), E.faecalis (MIC&gt;7 ug/ml), S.epidermidis (MIC&gt;12 ug/ml), S.aureux (MIC&gt;5 ug/ml), E.coli (MIC&gt;7 ug/ml), K.pneumonia (MIC&gt;8 ug/ml), P.aeruginosa (MIC&gt;10 ug/ml), and S.enteric (MIC&gt;9 ug/ml). It also shows antifungal activities: A.niger (MIC&gt;15 ug/ml), B.cinerea (MIC&gt;12 ug/ml), F.solani (MIC&gt;15 ug/ml), and P.digitatum (MIC&gt;10 ug/ml). The chain is Non-toxic phospholipase A2 from Walterinnesia aegyptia (Desert black snake).